We begin with the raw amino-acid sequence, 635 residues long: Threonine--tRNA ligase (635 aa).

Residues 1 to 61 (MVSIRLPDGS…DHDVALAIVT (61 aa)) enclose the TGS domain. A catalytic region spans residues 242–533 (DHRKLGKQLD…LIEHHAGAMP (292 aa)). Residues C333, H384, and H510 each coordinate Zn(2+).

This sequence belongs to the class-II aminoacyl-tRNA synthetase family. In terms of assembly, homodimer. Zn(2+) is required as a cofactor.

Its subcellular location is the cytoplasm. The catalysed reaction is tRNA(Thr) + L-threonine + ATP = L-threonyl-tRNA(Thr) + AMP + diphosphate + H(+). Catalyzes the attachment of threonine to tRNA(Thr) in a two-step reaction: L-threonine is first activated by ATP to form Thr-AMP and then transferred to the acceptor end of tRNA(Thr). Also edits incorrectly charged L-seryl-tRNA(Thr). The polypeptide is Threonine--tRNA ligase (Paraburkholderia phymatum (strain DSM 17167 / CIP 108236 / LMG 21445 / STM815) (Burkholderia phymatum)).